A 178-amino-acid chain; its full sequence is ATP-dependent protease subunit HslV (178 aa).

Residue threonine 7 is part of the active site. Na(+)-binding residues include glycine 162, cysteine 165, and threonine 168.

It belongs to the peptidase T1B family. HslV subfamily. A double ring-shaped homohexamer of HslV is capped on each side by a ring-shaped HslU homohexamer. The assembly of the HslU/HslV complex is dependent on binding of ATP.

Its subcellular location is the cytoplasm. It carries out the reaction ATP-dependent cleavage of peptide bonds with broad specificity.. With respect to regulation, allosterically activated by HslU binding. In terms of biological role, protease subunit of a proteasome-like degradation complex believed to be a general protein degrading machinery. The chain is ATP-dependent protease subunit HslV from Sulfurihydrogenibium sp. (strain YO3AOP1).